We begin with the raw amino-acid sequence, 145 residues long: Putative pre-16S rRNA nuclease (145 aa).

This sequence belongs to the YqgF nuclease family.

It is found in the cytoplasm. Could be a nuclease involved in processing of the 5'-end of pre-16S rRNA. The polypeptide is Putative pre-16S rRNA nuclease (Sulfurihydrogenibium sp. (strain YO3AOP1)).